Reading from the N-terminus, the 283-residue chain is Protein ATAF2 (283 aa).

The 153-residue stretch at 7-159 (LPAGFRFHPT…DWVLCRIYNK (153 aa)) folds into the NAC domain. The DNA-binding element occupies 103–165 (LGIKKALVFY…IYNKKGTMEK (63 aa)). Residues 171–211 (EKPRTTTMAEQSSSPFDTSDSTYPTLQEDDSSSSGGHGHVV) form a disordered region. Residues 175–195 (TTTMAEQSSSPFDTSDSTYPT) show a composition bias toward polar residues.

In terms of assembly, homodimer. Interacts with AHK2. Interacts with AHL12 and AHL27. Interacts with the helicase domain of the tobamovirus (TMV) replicase. In terms of tissue distribution, expressed in roots, cotyledons, rosette leaves, cauline leaves and mature flowers. Expressed at low levels in stems and flower buds.

It is found in the nucleus. Functionally, involved in disease resistance response. May function as repressor of pathogenesis-related proteins. May function in the regulation of host basal defense responses against viral infection. Transcriptional activator involved in responses to wounding and infection with tobamovirus (TMV). Binds to the DNA sequences 5'-AAAATATCT-3' and 5'AGATTTTT-3' of CYP734A1/BAS1 and CYP72C1/SOB7 promoters, respectively. Acts as a suppressor of the brassinosteroid (BR)-inactivating enzymes CYP734A1/BAS1 and CYP72C1/SOB7, and prevents their expression in almost all tissues. Plays a central role in integrating BR homeostasis and seedling development. Regulates the spatial regulation of BR homeostasis and participates in the regulation of hypocotyl elongation and root growth by suppressing BR catabolism. Mediates connection between BR catabolism and photomorphogenesis. Binds to, and transactivates the promoter of the auxin biosynthetic gene NIT2. Stress-responsive NAC transcription factor involved in ABA-inducible leaf senescence signaling. Required for normal seed development and morphology. This Arabidopsis thaliana (Mouse-ear cress) protein is Protein ATAF2 (NAC081).